The sequence spans 174 residues: Chorismate pyruvate-lyase (174 aa).

Substrate-binding residues include Met36, Arg78, Leu116, and Glu157.

Belongs to the UbiC family. Monomer.

The protein localises to the cytoplasm. The enzyme catalyses chorismate = 4-hydroxybenzoate + pyruvate. It functions in the pathway cofactor biosynthesis; ubiquinone biosynthesis. In terms of biological role, removes the pyruvyl group from chorismate, with concomitant aromatization of the ring, to provide 4-hydroxybenzoate (4HB) for the ubiquinone pathway. The protein is Chorismate pyruvate-lyase of Serratia proteamaculans (strain 568).